The sequence spans 361 residues: tRNA 2-selenouridine synthase (361 aa).

The Rhodanese domain occupies 11–134; that stretch reads ALLERPLIDV…MRQCVNAEIE (124 aa). Cys94 acts as the S-selanylcysteine intermediate in catalysis.

The protein belongs to the SelU family. Monomer.

It catalyses the reaction 5-methylaminomethyl-2-thiouridine(34) in tRNA + selenophosphate + (2E)-geranyl diphosphate + H2O + H(+) = 5-methylaminomethyl-2-selenouridine(34) in tRNA + (2E)-thiogeraniol + phosphate + diphosphate. The catalysed reaction is 5-methylaminomethyl-2-thiouridine(34) in tRNA + (2E)-geranyl diphosphate = 5-methylaminomethyl-S-(2E)-geranyl-thiouridine(34) in tRNA + diphosphate. The enzyme catalyses 5-methylaminomethyl-S-(2E)-geranyl-thiouridine(34) in tRNA + selenophosphate + H(+) = 5-methylaminomethyl-2-(Se-phospho)selenouridine(34) in tRNA + (2E)-thiogeraniol. It carries out the reaction 5-methylaminomethyl-2-(Se-phospho)selenouridine(34) in tRNA + H2O = 5-methylaminomethyl-2-selenouridine(34) in tRNA + phosphate. Involved in the post-transcriptional modification of the uridine at the wobble position (U34) of tRNA(Lys), tRNA(Glu) and tRNA(Gln). Catalyzes the conversion of 2-thiouridine (S2U-RNA) to 2-selenouridine (Se2U-RNA). Acts in a two-step process involving geranylation of 2-thiouridine (S2U) to S-geranyl-2-thiouridine (geS2U) and subsequent selenation of the latter derivative to 2-selenouridine (Se2U) in the tRNA chain. The polypeptide is tRNA 2-selenouridine synthase (Chromohalobacter salexigens (strain ATCC BAA-138 / DSM 3043 / CIP 106854 / NCIMB 13768 / 1H11)).